Consider the following 402-residue polypeptide: Multidrug resistance protein MdtH (402 aa).

The Cytoplasmic segment spans residues 1–12 (MSRVSQARNLGK). A helical transmembrane segment spans residues 13 to 33 (YFLLIDNMLVVLGFFVVFPLI). At 34–98 (SIRFVDQMGW…GFATMGIAHE (65 aa)) the chain is on the periplasmic side. A helical transmembrane segment spans residues 99-116 (PWLLWFSCLLSGLGGTLF). The Cytoplasmic segment spans residues 117–138 (DPPRSALVVKLIRPQQRGRFFS). The chain crosses the membrane as a helical span at residues 139 to 159 (LLMMQDSAGAVIGALLGSWLL). Over 160–164 (QYDFR) the chain is Periplasmic. A helical transmembrane segment spans residues 165–185 (LVCATGAVLFVLCAAFNAWLL). The Cytoplasmic segment spans residues 186–213 (PAWKLSTVRTPVREGMTRVMRDKRFVTY). Residues 214-234 (VLTLAGYYMLAVQVMLMLPIM) traverse the membrane as a helical segment. Residues 235-243 (VNDVAGAPS) lie on the Periplasmic side of the membrane. A helical transmembrane segment spans residues 244–264 (AVKWMYAIEACLSLTLLYPIA). Residues 265–276 (RWSEKHFRLEHR) are Cytoplasmic-facing. A helical membrane pass occupies residues 277–297 (LMAGLLIMSLSMMPVGMVSGL). The Periplasmic portion of the chain corresponds to 298–299 (QQ). A helical transmembrane segment spans residues 300–320 (LFTLICLFYIGSIIAEPARET). Residues 321-339 (LSASLADARARGSYMGCSR) are Cytoplasmic-facing. A helical transmembrane segment spans residues 340 to 360 (LGLAIGGAIGYIGGGWLFDLG). At 361-367 (KSAHQPE) the chain is on the periplasmic side. The helical transmembrane segment at 368–388 (LPWMMLGIIGIFTFLALGWQF) threads the bilayer. Residues 389–402 (SQKRAARRLLERDA) lie on the Cytoplasmic side of the membrane.

Belongs to the major facilitator superfamily. DHA1 family. MdtH (TC 2.A.1.2.21) subfamily.

The protein resides in the cell inner membrane. Functionally, confers resistance to norfloxacin and enoxacin. This Escherichia coli (strain SE11) protein is Multidrug resistance protein MdtH.